Reading from the N-terminus, the 1017-residue chain is Multiple C2 domain and transmembrane region protein 14 (1017 aa).

The C2 1 domain occupies 1–110 (MADNVLRKLI…ASAGSETLVY (110 aa)). A disordered region spans residues 139 to 231 (AAPAATEPKP…PAEVKNPPIP (93 aa)). The segment covering 141 to 153 (PAATEPKPEAAAA) has biased composition (low complexity). Basic and acidic residues predominate over residues 154–213 (TEEKPPEIAKAEDGKKETEAAKTEEKKEGDKKEEEKPKEEAKPDEKKPDAPPDTKAKKPD). A compositionally biased stretch (pro residues) spans 217–231 (APPPPPAEVKNPPIP). C2 domains lie at 258–387 (DLEL…PQWY), 420–554 (DSGG…SRWF), and 587–714 (VTSD…LNSY). Ca(2+) contacts are provided by D296, N299, D352, T355, and E359. 2 helical membrane passes run 851-871 (VAIV…AFLI) and 957-977 (ATCI…IVPF).

Belongs to the MCTP family. Ca(2+) is required as a cofactor. As to expression, expressed in incipient leaf primordia and in roots meristems. Observed in flowers.

It localises to the membrane. It is found in the vesicle. The protein localises to the golgi apparatus membrane. In terms of biological role, may function as a signaling molecule by regulating the trafficking of other regulators. In Arabidopsis thaliana (Mouse-ear cress), this protein is Multiple C2 domain and transmembrane region protein 14.